Reading from the N-terminus, the 695-residue chain is Lasso peptide isopeptidase AtxE2 (695 aa).

An N-terminal signal peptide occupies residues Met-1–Ala-30. 2 cysteine pairs are disulfide-bonded: Cys-296–Cys-301 and Cys-354–Cys-363. The active-site Nucleophile is the Ser-527. Cys-551 and Cys-552 are joined by a disulfide. Catalysis depends on charge relay system residues Glu-610 and His-638.

The protein localises to the cytoplasm. Functionally, lasso peptide isopeptidase that specifically hydrolyzes Astexin-2 and Astexin-3, converting them to linear peptides. Has only a few specific contacts with substrates, because it recognizes Astexin knotted structure (principally the loop structure). Its binding to lasso peptides opens them to expose the isopeptide bonds for hydrolysis. The sequence is that of Lasso peptide isopeptidase AtxE2 from Asticcacaulis excentricus (strain ATCC 15261 / DSM 4724 / KCTC 12464 / NCIMB 9791 / VKM B-1370 / CB 48).